The primary structure comprises 46 residues: DNA-directed RNA polymerase subunit Rpo12 (46 aa).

Positions 9, 24, and 27 each coordinate Zn(2+).

Belongs to the archaeal Rpo12/eukaryotic RPC10 RNA polymerase subunit family. As to quaternary structure, part of the RNA polymerase complex. Interacts with Rpo3. Forms an Rpo3-Rpo10-Rpo11-Rpo12 complex upon coexpression. Requires Zn(2+) as cofactor.

It localises to the cytoplasm. It carries out the reaction RNA(n) + a ribonucleoside 5'-triphosphate = RNA(n+1) + diphosphate. DNA-dependent RNA polymerase (RNAP) catalyzes the transcription of DNA into RNA using the four ribonucleoside triphosphates as substrates. This chain is DNA-directed RNA polymerase subunit Rpo12, found in Methanocaldococcus jannaschii (strain ATCC 43067 / DSM 2661 / JAL-1 / JCM 10045 / NBRC 100440) (Methanococcus jannaschii).